The primary structure comprises 472 residues: GTPase Der (472 aa).

2 EngA-type G domains span residues 3–166 (PIIA…IQNN) and 188–361 (IKLA…HCST). Residues 9–16 (GRPNVGKS), 56–60 (DTGGI), 118–121 (NKID), 194–201 (GSSNVGKS), 241–245 (DTAGL), and 306–309 (NKWD) contribute to the GTP site. Residues 362-446 (KRISTALLTK…PIRIQFNEPA (85 aa)) form the KH-like domain.

The protein belongs to the TRAFAC class TrmE-Era-EngA-EngB-Septin-like GTPase superfamily. EngA (Der) GTPase family. In terms of assembly, associates with the 50S ribosomal subunit.

In terms of biological role, GTPase that plays an essential role in the late steps of ribosome biogenesis. The protein is GTPase Der of Baumannia cicadellinicola subsp. Homalodisca coagulata.